Consider the following 318-residue polypeptide: NADH-ubiquinone oxidoreductase chain 1 (318 aa).

8 helical membrane passes run phenylalanine 3–valine 23, leucine 70–proline 90, leucine 100–glycine 120, methionine 146–isoleucine 166, histidine 171–alanine 191, isoleucine 231–tyrosine 251, leucine 254–isoleucine 273, and leucine 294–isoleucine 314.

It belongs to the complex I subunit 1 family. In terms of assembly, core subunit of respiratory chain NADH dehydrogenase (Complex I) which is composed of 45 different subunits.

The protein localises to the mitochondrion inner membrane. The enzyme catalyses a ubiquinone + NADH + 5 H(+)(in) = a ubiquinol + NAD(+) + 4 H(+)(out). Core subunit of the mitochondrial membrane respiratory chain NADH dehydrogenase (Complex I) which catalyzes electron transfer from NADH through the respiratory chain, using ubiquinone as an electron acceptor. Essential for the catalytic activity and assembly of complex I. The protein is NADH-ubiquinone oxidoreductase chain 1 of Rattus norvegicus (Rat).